Here is a 144-residue protein sequence, read N- to C-terminus: Large ribosomal subunit protein uL15 (144 aa).

Residues 1 to 51 (MELNSIKPGSGSKHAKRRVGRGIGSGLGKTAGRGHKGQKSRAGGYHKVGFE) form a disordered region. The segment covering 21–31 (RGIGSGLGKTA) has biased composition (gly residues).

This sequence belongs to the universal ribosomal protein uL15 family. As to quaternary structure, part of the 50S ribosomal subunit.

Its function is as follows. Binds to the 23S rRNA. This chain is Large ribosomal subunit protein uL15, found in Leptothrix cholodnii (strain ATCC 51168 / LMG 8142 / SP-6) (Leptothrix discophora (strain SP-6)).